We begin with the raw amino-acid sequence, 90 residues long: UPF0297 protein lwe1516 (90 aa).

This sequence belongs to the UPF0297 family.

In Listeria welshimeri serovar 6b (strain ATCC 35897 / DSM 20650 / CCUG 15529 / CIP 8149 / NCTC 11857 / SLCC 5334 / V8), this protein is UPF0297 protein lwe1516.